The sequence spans 195 residues: ATP-dependent Clp protease proteolytic subunit (195 aa).

Catalysis depends on serine 98, which acts as the Nucleophile. Residue histidine 123 is part of the active site.

It belongs to the peptidase S14 family. In terms of assembly, fourteen ClpP subunits assemble into 2 heptameric rings which stack back to back to give a disk-like structure with a central cavity, resembling the structure of eukaryotic proteasomes.

It localises to the cytoplasm. The catalysed reaction is Hydrolysis of proteins to small peptides in the presence of ATP and magnesium. alpha-casein is the usual test substrate. In the absence of ATP, only oligopeptides shorter than five residues are hydrolyzed (such as succinyl-Leu-Tyr-|-NHMec, and Leu-Tyr-Leu-|-Tyr-Trp, in which cleavage of the -Tyr-|-Leu- and -Tyr-|-Trp bonds also occurs).. In terms of biological role, cleaves peptides in various proteins in a process that requires ATP hydrolysis. Has a chymotrypsin-like activity. Plays a major role in the degradation of misfolded proteins. In Sulfurovum sp. (strain NBC37-1), this protein is ATP-dependent Clp protease proteolytic subunit.